The sequence spans 339 residues: Carboxyvinyl-carboxyphosphonate phosphorylmutase, chloroplastic (339 aa).

The N-terminal 30 residues, 1-30 (MSMLMAVKTTSLCCSSLNLTASPTFRRNPR), are a transit peptide targeting the chloroplast.

This sequence belongs to the isocitrate lyase/PEP mutase superfamily.

It is found in the plastid. It localises to the chloroplast. The catalysed reaction is 1-carboxyvinyl carboxyphosphonate + H(+) = 3-(hydrohydroxyphosphoryl)pyruvate + CO2. This Arabidopsis thaliana (Mouse-ear cress) protein is Carboxyvinyl-carboxyphosphonate phosphorylmutase, chloroplastic.